The primary structure comprises 140 residues: Large ribosomal subunit protein bL17 (140 aa).

The protein belongs to the bacterial ribosomal protein bL17 family. As to quaternary structure, part of the 50S ribosomal subunit. Contacts protein L32.

This Rhizobium rhizogenes (strain K84 / ATCC BAA-868) (Agrobacterium radiobacter) protein is Large ribosomal subunit protein bL17.